A 236-amino-acid polypeptide reads, in one-letter code: Auxin-responsive protein IAA16 (236 aa).

Positions 9–13 match the EAR-like (transcriptional repression) motif; the sequence is LRLGL. The interval 82-110 is disordered; that stretch reads KNVMSGQKPTTGDATEGNDKTSGSSGATS. The segment covering 85 to 94 has biased composition (polar residues); the sequence is MSGQKPTTGD. Positions 118 to 218 constitute a PB1 domain; the sequence is VAYVKVSMDG…SCKRIRIMKG (101 aa).

It belongs to the Aux/IAA family. As to quaternary structure, homodimers and heterodimers.

The protein localises to the nucleus. Its function is as follows. Aux/IAA proteins are short-lived transcriptional factors that function as repressors of early auxin response genes at low auxin concentrations. Repression is thought to result from the interaction with auxin response factors (ARFs), proteins that bind to the auxin-responsive promoter element (AuxRE). Formation of heterodimers with ARF proteins may alter their ability to modulate early auxin response genes expression. In Arabidopsis thaliana (Mouse-ear cress), this protein is Auxin-responsive protein IAA16 (IAA16).